We begin with the raw amino-acid sequence, 94 residues long: Integration host factor subunit beta (94 aa).

This sequence belongs to the bacterial histone-like protein family. In terms of assembly, heterodimer of an alpha and a beta chain.

In terms of biological role, this protein is one of the two subunits of integration host factor, a specific DNA-binding protein that functions in genetic recombination as well as in transcriptional and translational control. The polypeptide is Integration host factor subunit beta (Brucella anthropi (strain ATCC 49188 / DSM 6882 / CCUG 24695 / JCM 21032 / LMG 3331 / NBRC 15819 / NCTC 12168 / Alc 37) (Ochrobactrum anthropi)).